Reading from the N-terminus, the 157-residue chain is Ribosome maturation factor RimP (157 aa).

It belongs to the RimP family.

The protein resides in the cytoplasm. Its function is as follows. Required for maturation of 30S ribosomal subunits. This chain is Ribosome maturation factor RimP, found in Bacillus licheniformis (strain ATCC 14580 / DSM 13 / JCM 2505 / CCUG 7422 / NBRC 12200 / NCIMB 9375 / NCTC 10341 / NRRL NRS-1264 / Gibson 46).